Here is a 191-residue protein sequence, read N- to C-terminus: Syndecan-2-A (191 aa).

An N-terminal signal peptide occupies residues 1–22; it reads MRNVWLIVPFALLAALSGETWA. At 23-137 the chain is on the extracellular side; that stretch reads QADRDLYIDS…NLFHRTEVLA (115 aa). The segment at 32-60 is disordered; sequence STESSGNYPVDDDDYSSGSGSGIPARGDD. Residues S36, S48, S50, and S52 are each glycosylated (O-linked (Xyl...) (glycosaminoglycan) serine). The chain crosses the membrane as a helical span at residues 138–158; sequence AVIAGGGIGFLFAVFLILLLV. The Cytoplasmic segment spans residues 159 to 191; the sequence is YRMRKKDEGSYDLGERKPSSAVYQKAPTKEFYA. Residues 168 to 191 are disordered; the sequence is SYDLGERKPSSAVYQKAPTKEFYA.

Belongs to the syndecan proteoglycan family. In terms of processing, O-glycosylated; contains both heparan sulfate and chondroitin sulfate.

It is found in the membrane. Functionally, cell surface proteoglycan. The chain is Syndecan-2-A (sdc2-a) from Xenopus laevis (African clawed frog).